The primary structure comprises 634 residues: CRISPR-associated protein MJ1674 (634 aa).

Functionally, CRISPR (clustered regularly interspaced short palindromic repeat) is an adaptive immune system that provides protection against mobile genetic elements (viruses, transposable elements and conjugative plasmids). CRISPR clusters contain spacers, sequences complementary to antecedent mobile elements, and target invading nucleic acids. CRISPR clusters are transcribed and processed into CRISPR RNA (crRNA). The type III Csm effector complex binds crRNA and acts as a crRNA-guided RNase, DNase and cyclic oligoadenylate synthase; binding of target RNA cognate to the crRNA is required for all activities. The polypeptide is CRISPR-associated protein MJ1674 (Methanocaldococcus jannaschii (strain ATCC 43067 / DSM 2661 / JAL-1 / JCM 10045 / NBRC 100440) (Methanococcus jannaschii)).